Here is a 380-residue protein sequence, read N- to C-terminus: Cytochrome b (380 aa).

Helical transmembrane passes span Phe33–Met53, Trp77–Ile98, Trp113–Leu133, and Phe178–Leu198. 2 residues coordinate heme b: His83 and His97. Heme b is bound by residues His182 and His196. His201 contacts a ubiquinone. The next 4 membrane-spanning stretches (helical) occupy residues Tyr226–Ser246, Leu288–His308, Val320–Gly340, and Phe347–Pro367.

This sequence belongs to the cytochrome b family. As to quaternary structure, the cytochrome bc1 complex contains 3 respiratory subunits (MT-CYB, CYC1 and UQCRFS1), 2 core proteins (UQCRC1 and UQCRC2) and probably 6 low-molecular weight proteins. It depends on heme b as a cofactor.

It is found in the mitochondrion inner membrane. In terms of biological role, component of the ubiquinol-cytochrome c reductase complex (complex III or cytochrome b-c1 complex) that is part of the mitochondrial respiratory chain. The b-c1 complex mediates electron transfer from ubiquinol to cytochrome c. Contributes to the generation of a proton gradient across the mitochondrial membrane that is then used for ATP synthesis. The sequence is that of Cytochrome b (mt-cyb) from Kareius bicoloratus (Stone flounder).